Here is a 318-residue protein sequence, read N- to C-terminus: DNA-directed RNA polymerase subunit alpha (318 aa).

The tract at residues 1–232 (MAHQRIVGPT…NLFSPLQNVR (232 aa)) is alpha N-terminal domain (alpha-NTD). An alpha C-terminal domain (alpha-CTD) region spans residues 246–318 (KMTEVLVEEL…HLPKEKFTKD (73 aa)).

The protein belongs to the RNA polymerase alpha chain family. As to quaternary structure, in plastids the minimal PEP RNA polymerase catalytic core is composed of four subunits: alpha, beta, beta', and beta''. When a (nuclear-encoded) sigma factor is associated with the core the holoenzyme is formed, which can initiate transcription.

The protein resides in the plastid. It localises to the chloroplast. It carries out the reaction RNA(n) + a ribonucleoside 5'-triphosphate = RNA(n+1) + diphosphate. In terms of biological role, DNA-dependent RNA polymerase catalyzes the transcription of DNA into RNA using the four ribonucleoside triphosphates as substrates. In Chlorokybus atmophyticus (Soil alga), this protein is DNA-directed RNA polymerase subunit alpha.